A 437-amino-acid polypeptide reads, in one-letter code: Interactor protein for cytohesin exchange factors 1 (437 aa).

The region spanning 41 to 140 (HADCQGWLYK…WLNKLGSAVI (100 aa)) is the PH domain. Disordered stretches follow at residues 143–225 (ESTT…PDTV) and 273–307 (LSSD…ETKV). The segment covering 151 to 162 (CYSESEQEDPEI) has biased composition (acidic residues). Over residues 172 to 200 (ASQTQSLTAQQASSSSPSLSGTSYSFSSL) the composition is skewed to low complexity. Polar residues predominate over residues 201 to 214 (ENTVKTPSSFPSSL). The segment covering 273–283 (LSSDDTSSLSS) has biased composition (low complexity). CRAC domain regions lie at residues 315–320 (KLYKSL) and 339–348 (LRKSFVKRCK). The tract at residues 389 to 437 (KYREWKVMNTLLIQDIYQQQRASPAPDDTDDTPQELKKSPSSPSVENSI) is required for interaction with CYTH2. Residues 406 to 437 (QQQRASPAPDDTDDTPQELKKSPSSPSVENSI) form a disordered region. Position 411 is a phosphoserine (S411). The segment covering 427 to 437 (SPSSPSVENSI) has biased composition (polar residues).

In terms of assembly, interacts with guanine-nucleotide exchange factors PSCD1, PSCD2, PSCD3 and PSCD4. Interacts (via C-terminus) with cytohesin-2 CYTH2.

Its subcellular location is the cytoplasm. It localises to the cell membrane. Enhances the promotion of guanine-nucleotide exchange by PSCD2 on ARF6 in a concentration-dependent manner. The chain is Interactor protein for cytohesin exchange factors 1 (IPCEF1) from Homo sapiens (Human).